The sequence spans 48 residues: Disintegrin accutin (48 aa).

Gln1 is modified (pyrrolidone carboxylic acid). Positions Gln1–Tyr48 constitute a Disintegrin domain. 3 disulfides stabilise this stretch: Cys5–Cys11, Cys10–Cys35, and Cys23–Cys42. The Cell attachment site signature appears at Arg27–Asp29.

Belongs to the venom metalloproteinase (M12B) family. P-II subfamily. P-IIa sub-subfamily. In terms of assembly, monomer (disintegrin). In terms of tissue distribution, expressed by the venom gland.

It localises to the secreted. Inhibit human platelet aggregation induced by ADP, collagen, thrombin or the thromboxane analog U46619 in platelet suspension with IC(50) values of 66-267 nM. Acts by inhibiting fibrinogen interaction with platelet receptors GPIIb/GPIIIa (ITGA2B/ITGB3). It also inhibits angiogenesis in vivo and in vitro by blocking integrin alpha-V/beta-3 (ITGAV/ITGB3) of endothelial cells and by inducing apoptosis. In Deinagkistrodon acutus (Hundred-pace snake), this protein is Disintegrin accutin.